Reading from the N-terminus, the 1063-residue chain is Structural polyprotein (1063 aa).

Residues 1-131 (MASTTPITME…LGPPTNPFQA (131 aa)) are disordered. Positions 30–69 (GASQSRRPRPPRQRDSSTSGDDSGRDSGGPRRRRGNRGRG) are human C1QBP/SF2P32-binding. Phosphoserine; by host is present on serine 46. The span at 70 to 87 (QLRDWSRAPPPPEERQES) shows a compositional bias: basic and acidic residues. The span at 93 to 107 (APKPSRAPPQQPQPP) shows a compositional bias: pro residues. The cysteines at positions 153 and 197 are disulfide-linked. The segment at 279–300 (GAPQAFLAGLLLAAVAVGTARA) is functions as E2 signal peptide. Over 301-534 (GLQPRADMAA…LWLATANALS (234 aa)) the chain is Extracellular. N-linked (GlcNAc...) asparagine; by host glycosylation is found at asparagine 353, asparagine 371, asparagine 410, and asparagine 429. Residues 535 to 555 (LDHALAAFVLLVPWVLIFMVC) form a helical membrane-spanning segment. The Cytoplasmic segment spans residues 556–582 (RRACRRRGAAAALTAVVLQGYNPPAYG). Residues 563–582 (GAAAALTAVVLQGYNPPAYG) form a functions as E1 signal peptide region. Topologically, residues 583-1028 (EEAFTYLCTA…QTWAEWAAAH (446 aa)) are extracellular. Intrachain disulfides connect cysteine 590–cysteine 595, cysteine 619–cysteine 824, cysteine 641–cysteine 653, cysteine 699–cysteine 712, cysteine 758–cysteine 767, cysteine 807–cysteine 817, cysteine 931–cysteine 934, and cysteine 950–cysteine 983. Residue asparagine 658 is glycosylated (N-linked (GlcNAc...) asparagine; by host). Positions 670 and 671 each coordinate Ca(2+). Aspartate 718 and threonine 719 together coordinate Ca(2+). Residues asparagine 759 and asparagine 791 are each glycosylated (N-linked (GlcNAc...) asparagine; by host). O-linked (GalNAc...) threonine; by host glycans are attached at residues threonine 1011 and threonine 1012. Residues 1029–1049 (WWQLTLGAICALLLAGLLACC) form a helical membrane-spanning segment. Over 1050–1063 (AKCLYYLRGAIAPR) the chain is Extracellular.

In terms of assembly, homodimer; further assembles into homooligomer. Interacts with human C1QBP. Interacts (via N-terminus) with protease/methyltransferase p150. As to quaternary structure, heterodimer with spike glycoprotein E2. Heterodimer with spike glycoprotein E1. Post-translationally, structural polyprotein: Specific enzymatic cleavages in vivo yield mature proteins. Two signal peptidase-mediated cleavages within the polyprotein produce the structural proteins capsid, E2, and E1. The E2 signal peptide remains attached to the C-terminus of the capsid protein after cleavage by the signal peptidase. Another signal peptide at E2 C-terminus directs E1 to the ER, with a similar mechanism. In terms of processing, contains three N-linked oligosaccharides. Capsid is phosphorylated on Ser-46 by host. This phosphorylation negatively regulates capsid protein RNA-binding activity. Dephosphorylated by human PP1A.

It localises to the virion. The protein localises to the host cytoplasm. The protein resides in the host mitochondrion. It is found in the virion membrane. Its subcellular location is the host Golgi apparatus membrane. Capsid protein interacts with genomic RNA and assembles into icosahedric core particles 65-70 nm in diameter. The resulting nucleocapsid eventually associates with the cytoplasmic domain of E2 at the cell membrane, leading to budding and formation of mature virions from host Golgi membranes. Phosphorylation negatively regulates RNA-binding activity, possibly delaying virion assembly during the viral replication phase. Capsid protein dimerizes and becomes disulfide-linked in the virion. Modulates genomic RNA replication. Modulates subgenomic RNA synthesis by interacting with human C1QBP/SF2P32. Induces both perinuclear clustering of mitochondria and the formation of electron-dense intermitochondrial plaques, both hallmarks of rubella virus infected cells. Induces apoptosis when expressed in transfected cells. Its function is as follows. Responsible for viral attachment to target host cell, by binding to the cell receptor. Its transport to the plasma membrane depends on interaction with E1 protein. The surface glycoproteins display an irregular helical organization and a pseudo-tetrameric inner nucleocapsid arrangement. In terms of biological role, class II viral fusion protein. Fusion activity is inactive as long as E1 is bound to E2 in mature virion. After virus attachment to target cell and clathrin-mediated endocytosis, acidification of the endosome would induce dissociation of E1/E2 heterodimer and concomitant trimerization of the E1 subunits. This E1 homotrimer is fusion active, and promotes release of viral nucleocapsid in cytoplasm after endosome and viral membrane fusion. The cytoplasmic tail of spike glycoprotein E1 modulates virus release. The surface glycoproteins display an irregular helical organization and a pseudo-tetrameric inner nucleocapsid arrangement. The polypeptide is Structural polyprotein (Rubella virus (strain TO-336 vaccine) (RUBV)).